A 306-amino-acid polypeptide reads, in one-letter code: Nucleotide-binding protein RSal33209_2275 (306 aa).

Position 29–36 (29–36 (GMSGAGRS)) interacts with ATP. 80 to 83 (DVRG) contributes to the GTP binding site.

It belongs to the RapZ-like family.

Its function is as follows. Displays ATPase and GTPase activities. The sequence is that of Nucleotide-binding protein RSal33209_2275 from Renibacterium salmoninarum (strain ATCC 33209 / DSM 20767 / JCM 11484 / NBRC 15589 / NCIMB 2235).